The chain runs to 413 residues: Multidrug resistance protein MdtA (413 aa).

An N-terminal signal peptide occupies residues 1–20 (MKGSNTFRWAIAIGVVVAAA). 2 disordered regions span residues 31–57 (SPTA…RDGP) and 392–413 (PQTT…GARA). Residues 397-413 (ADEKSPSRHEGQKGARA) show a composition bias toward basic and acidic residues.

The protein belongs to the membrane fusion protein (MFP) (TC 8.A.1) family. As to quaternary structure, part of a tripartite efflux system composed of MdtA, MdtB and MdtC.

It localises to the cell inner membrane. This Salmonella heidelberg (strain SL476) protein is Multidrug resistance protein MdtA.